The following is a 148-amino-acid chain: Large ribosomal subunit protein eL19 (148 aa).

Residues 52 to 76 show a composition bias toward basic residues; it reads KPKKGISSYRSKKIAQQKKKGRRRG. The disordered stretch occupies residues 52-95; that stretch reads KPKKGISSYRSKKIAQQKKKGRRRGPGSIKGAKGARRPKKDEWM.

The protein belongs to the eukaryotic ribosomal protein eL19 family. Part of the 50S ribosomal subunit.

Its function is as follows. Binds to the 23S rRNA. This chain is Large ribosomal subunit protein eL19, found in Methanothermobacter thermautotrophicus (strain ATCC 29096 / DSM 1053 / JCM 10044 / NBRC 100330 / Delta H) (Methanobacterium thermoautotrophicum).